The sequence spans 433 residues: Adenosylhomocysteinase A (433 aa).

The substrate site is built by Thr-57, Asp-132, Glu-157, Lys-187, and Asp-191. An NAD binding region spans residues 184–351; that stretch reads SVTKSKFDNL…EGRLVNLGCA (168 aa).

Belongs to the adenosylhomocysteinase family. Homotetramer. The cofactor is NAD(+).

Its subcellular location is the cytoplasm. It catalyses the reaction S-adenosyl-L-homocysteine + H2O = L-homocysteine + adenosine. It functions in the pathway amino-acid biosynthesis; L-homocysteine biosynthesis; L-homocysteine from S-adenosyl-L-homocysteine: step 1/1. Its function is as follows. Catalyzes the hydrolysis of S-adenosyl-L-homocysteine to form adenosine and homocysteine. Binds copper ions. This Xenopus laevis (African clawed frog) protein is Adenosylhomocysteinase A (ahcy-a).